We begin with the raw amino-acid sequence, 76 residues long: MGGISITQLLIIVAIVVLLFGTKKLRTLGSDLGESVKGFKKAMADDNKEKDAEFKSLSDDSETTAKTEKAKDKEQA.

A helical transmembrane segment spans residues 1–21; it reads MGGISITQLLIIVAIVVLLFG. The disordered stretch occupies residues 45–76; that stretch reads DDNKEKDAEFKSLSDDSETTAKTEKAKDKEQA.

The protein belongs to the TatA/E family. In terms of assembly, the Tat system comprises two distinct complexes: a TatABC complex, containing multiple copies of TatA, TatB and TatC subunits, and a separate TatA complex, containing only TatA subunits. Substrates initially bind to the TatABC complex, which probably triggers association of the separate TatA complex to form the active translocon.

The protein resides in the cell inner membrane. Its function is as follows. Part of the twin-arginine translocation (Tat) system that transports large folded proteins containing a characteristic twin-arginine motif in their signal peptide across membranes. TatA could form the protein-conducting channel of the Tat system. The sequence is that of Sec-independent protein translocase protein TatA from Pasteurella multocida (strain Pm70).